A 644-amino-acid chain; its full sequence is Beta-mannosyltransferase 2 (644 aa).

Residues 1-6 lie on the Cytoplasmic side of the membrane; the sequence is MRTRLN. A helical membrane pass occupies residues 7–27; sequence FLLLCIASVLSVIWIGVLLTW. Topologically, residues 28 to 644 are extracellular; it reads NDNNLGGISL…NDKKDLKIRQ (617 aa). N484 is a glycosylation site (N-linked (GlcNAc...) asparagine). Positions 512–644 form a coiled coil; it reads TRGEAERRRR…NDKKDLKIRQ (133 aa). The tract at residues 517–644 is disordered; the sequence is ERRRRVAEER…NDKKDLKIRQ (128 aa).

The protein belongs to the BMT family.

Its subcellular location is the membrane. Functionally, beta-mannosyltransferase involved in cell wall biosynthesis. Initiates the beta-mannosylation of core N-linked glycans. This chain is Beta-mannosyltransferase 2 (BMT2), found in Komagataella phaffii (strain GS115 / ATCC 20864) (Yeast).